The following is a 244-amino-acid chain: Glutathione S-transferase theta-2 (244 aa).

Positions 2 to 82 (GLELFLDLVS…YLSCKYQTPD (81 aa)) constitute a GST N-terminal domain. Residues 40–41 (HK), 53–54 (KL), 66–67 (ES), and 104–107 (DCIR) each bind glutathione. In terms of domain architecture, GST C-terminal spans 88 to 224 (DLQARARVHE…SILEQAAKKT (137 aa)).

Belongs to the GST superfamily. Theta family. As to quaternary structure, homodimer. In terms of tissue distribution, expressed at low levels in liver. In lung, expressed at low levels in ciliated bronchiolar cells, alveolar macrophages and alveolar type II cells.

Its subcellular location is the cytoplasm. It is found in the cytosol. The protein resides in the nucleus. The catalysed reaction is RX + glutathione = an S-substituted glutathione + a halide anion + H(+). In terms of biological role, conjugation of reduced glutathione to a wide number of exogenous and endogenous hydrophobic electrophiles. Has a sulfatase activity. The protein is Glutathione S-transferase theta-2 (GSTT2) of Homo sapiens (Human).